The sequence spans 116 residues: Large ribosomal subunit protein uL18 (116 aa).

The protein belongs to the universal ribosomal protein uL18 family. As to quaternary structure, part of the 50S ribosomal subunit; part of the 5S rRNA/L5/L18/L25 subcomplex. Contacts the 5S and 23S rRNAs.

Functionally, this is one of the proteins that bind and probably mediate the attachment of the 5S RNA into the large ribosomal subunit, where it forms part of the central protuberance. The chain is Large ribosomal subunit protein uL18 from Shewanella amazonensis (strain ATCC BAA-1098 / SB2B).